The primary structure comprises 229 residues: Cytidylate kinase (229 aa).

An ATP-binding site is contributed by 12-20 (GPSGSGKGT).

This sequence belongs to the cytidylate kinase family. Type 1 subfamily.

The protein localises to the cytoplasm. It catalyses the reaction CMP + ATP = CDP + ADP. The enzyme catalyses dCMP + ATP = dCDP + ADP. The polypeptide is Cytidylate kinase (Pseudomonas fluorescens (strain SBW25)).